We begin with the raw amino-acid sequence, 235 residues long: tRNA (guanine-N(7)-)-methyltransferase (235 aa).

Residues Gly-60, 83 to 84, 116 to 117, and Leu-136 contribute to the S-adenosyl-L-methionine site; these read EI and NA. The active site involves Asp-139. Residue 214-216 participates in S-adenosyl-L-methionine binding; it reads SEE.

It belongs to the class I-like SAM-binding methyltransferase superfamily. TrmB family.

The protein localises to the nucleus. It carries out the reaction guanosine(46) in tRNA + S-adenosyl-L-methionine = N(7)-methylguanosine(46) in tRNA + S-adenosyl-L-homocysteine. Its pathway is tRNA modification; N(7)-methylguanine-tRNA biosynthesis. In terms of biological role, catalyzes the formation of N(7)-methylguanine at position 46 (m7G46) in tRNA. In Anopheles gambiae (African malaria mosquito), this protein is tRNA (guanine-N(7)-)-methyltransferase.